Reading from the N-terminus, the 496-residue chain is UDP-glycosyltransferase 73C2 (496 aa).

Residues Ser297, 357-359 (SPQ), 374-382 (HCGWNSTLE), and 396-399 (FGDQ) contribute to the UDP-alpha-D-glucose site.

This sequence belongs to the UDP-glycosyltransferase family.

This Arabidopsis thaliana (Mouse-ear cress) protein is UDP-glycosyltransferase 73C2 (UGT73C2).